Reading from the N-terminus, the 131-residue chain is D-ribose pyranase (131 aa).

The Proton donor role is filled by His20. Substrate is bound by residues Asp28, His98, and 120–122; that span reads YAN.

The protein belongs to the RbsD / FucU family. RbsD subfamily. In terms of assembly, homodecamer.

It localises to the cytoplasm. The enzyme catalyses beta-D-ribopyranose = beta-D-ribofuranose. It functions in the pathway carbohydrate metabolism; D-ribose degradation; D-ribose 5-phosphate from beta-D-ribopyranose: step 1/2. In terms of biological role, catalyzes the interconversion of beta-pyran and beta-furan forms of D-ribose. The chain is D-ribose pyranase from Bacillus cereus (strain G9842).